The sequence spans 383 residues: Probable protein phosphatase 2C 13 (383 aa).

Residues Arg78–Phe349 form the PPM-type phosphatase domain. Positions 121, 122, 297, and 340 each coordinate Mn(2+).

The protein belongs to the PP2C family. It depends on Mg(2+) as a cofactor. Mn(2+) is required as a cofactor.

It catalyses the reaction O-phospho-L-seryl-[protein] + H2O = L-seryl-[protein] + phosphate. The enzyme catalyses O-phospho-L-threonyl-[protein] + H2O = L-threonyl-[protein] + phosphate. The chain is Probable protein phosphatase 2C 13 from Arabidopsis thaliana (Mouse-ear cress).